A 273-amino-acid chain; its full sequence is Dermonecrotic toxin LapSicTox-alphaIB1c (273 aa).

H5 is a catalytic residue. The Mg(2+) site is built by E25 and D27. The active-site Nucleophile is the H41. 2 cysteine pairs are disulfide-bonded: C45-C51 and C47-C190. Residue D85 coordinates Mg(2+). Residue N250 is glycosylated (N-linked (GlcNAc...) asparagine).

The protein belongs to the arthropod phospholipase D family. Class II subfamily. It depends on Mg(2+) as a cofactor. In terms of tissue distribution, expressed by the venom gland.

Its subcellular location is the secreted. The catalysed reaction is an N-(acyl)-sphingosylphosphocholine = an N-(acyl)-sphingosyl-1,3-cyclic phosphate + choline. It carries out the reaction an N-(acyl)-sphingosylphosphoethanolamine = an N-(acyl)-sphingosyl-1,3-cyclic phosphate + ethanolamine. It catalyses the reaction a 1-acyl-sn-glycero-3-phosphocholine = a 1-acyl-sn-glycero-2,3-cyclic phosphate + choline. The enzyme catalyses a 1-acyl-sn-glycero-3-phosphoethanolamine = a 1-acyl-sn-glycero-2,3-cyclic phosphate + ethanolamine. Dermonecrotic toxins cleave the phosphodiester linkage between the phosphate and headgroup of certain phospholipids (sphingolipid and lysolipid substrates), forming an alcohol (often choline) and a cyclic phosphate. This toxin acts on sphingomyelin (SM). It may also act on ceramide phosphoethanolamine (CPE), lysophosphatidylcholine (LPC) and lysophosphatidylethanolamine (LPE), but not on lysophosphatidylserine (LPS), and lysophosphatidylglycerol (LPG). It acts by transphosphatidylation, releasing exclusively cyclic phosphate products as second products. Induces dermonecrosis, hemolysis, increased vascular permeability, edema, inflammatory response, and platelet aggregation. The chain is Dermonecrotic toxin LapSicTox-alphaIB1c from Loxosceles apachea (Apache recluse spider).